A 245-amino-acid chain; its full sequence is MSLTSIPSLREQQHPLIRQLADCIEEVWHQHLDLSPYHLPAELGYVEGRLEGEKLTIENRCYQTPQFRKMHLELAKVGNMLDILHCVMFPRPEYDLPMFGCDLVGGRGQISAAIADLSPVHLDRTLPASYNSALTNLDTLNFSQPRELPEWGNIFSDFCIFVRPSSPEEEAMFLGRVREFLQVHCQGAIAASPVSAEQKQHILAGQHNYCSKQQQNDKTRRVLEKAFGTDWAENYMTTVLFDLPE.

The protein belongs to the HY2 family.

It catalyses the reaction (2R,3Z)-phycocyanobilin + 4 oxidized [2Fe-2S]-[ferredoxin] = biliverdin IXalpha + 4 reduced [2Fe-2S]-[ferredoxin] + 4 H(+). Catalyzes the four-electron reduction of biliverdin IX-alpha (2-electron reduction at both the A and D rings); the reaction proceeds via an isolatable 2-electron intermediate, 181,182-dihydrobiliverdin. In Trichormus variabilis (strain ATCC 29413 / PCC 7937) (Anabaena variabilis), this protein is Phycocyanobilin:ferredoxin oxidoreductase.